The sequence spans 286 residues: 33 kDa chaperonin (286 aa).

2 disulfides stabilise this stretch: cysteine 225-cysteine 227 and cysteine 258-cysteine 261.

This sequence belongs to the HSP33 family. In terms of processing, under oxidizing conditions two disulfide bonds are formed involving the reactive cysteines. Under reducing conditions zinc is bound to the reactive cysteines and the protein is inactive.

It is found in the cytoplasm. Redox regulated molecular chaperone. Protects both thermally unfolding and oxidatively damaged proteins from irreversible aggregation. Plays an important role in the bacterial defense system toward oxidative stress. This Shewanella frigidimarina (strain NCIMB 400) protein is 33 kDa chaperonin.